The chain runs to 224 residues: Na(+)-translocating NADH-quinone reductase subunit D (224 aa).

The next 5 membrane-spanning stretches (helical) occupy residues 43 to 63 (TVMA…ISMI), 67 to 87 (IPSS…VIVV), 104 to 124 (VFVG…AFAM), 132 to 152 (FFDG…LGFV), and 179 to 199 (NGLL…IWAL).

It belongs to the NqrDE/RnfAE family. In terms of assembly, composed of six subunits; NqrA, NqrB, NqrC, NqrD, NqrE and NqrF.

The protein localises to the cell inner membrane. It catalyses the reaction a ubiquinone + n Na(+)(in) + NADH + H(+) = a ubiquinol + n Na(+)(out) + NAD(+). In terms of biological role, NQR complex catalyzes the reduction of ubiquinone-1 to ubiquinol by two successive reactions, coupled with the transport of Na(+) ions from the cytoplasm to the periplasm. NqrA to NqrE are probably involved in the second step, the conversion of ubisemiquinone to ubiquinol. This Pseudomonas aeruginosa (strain LESB58) protein is Na(+)-translocating NADH-quinone reductase subunit D.